A 317-amino-acid polypeptide reads, in one-letter code: Carbonic anhydrase 5B, mitochondrial (317 aa).

The N-terminal 33 residues, 1 to 33 (MTVMSHLRVSLQVSSCTLLWRRFRVPRLVPLRS), are a transit peptide targeting the mitochondrion. One can recognise an Alpha-carbonic anhydrase domain in the interval 37–296 (YTCTYRTRNR…LMNRTVRSSF (260 aa)). Zn(2+)-binding residues include H130, H132, and H155. Residue 235–236 (TT) participates in substrate binding.

The protein belongs to the alpha-carbonic anhydrase family. Zn(2+) is required as a cofactor.

It localises to the mitochondrion. The catalysed reaction is hydrogencarbonate + H(+) = CO2 + H2O. In terms of biological role, mitochondrial carbonic anhydrase that catalyzes the reversible conversion of carbon dioxide to bicarbonate/HCO3. The chain is Carbonic anhydrase 5B, mitochondrial (Ca5b) from Rattus norvegicus (Rat).